The following is an 801-amino-acid chain: Disks large homolog 4 (801 aa).

The L27 domain maps to K4–Q60. PDZ domains follow at residues E153–K240 and E248–L335. The tract at residues H339 to R373 is disordered. A PDZ 3 domain is found at R393–P474. The SH3 domain occupies K507–E577. Residues A610 to E786 enclose the Guanylate kinase-like domain.

It belongs to the MAGUK family. Post-translationally, ubiquitinated by MDM2 in response to NMDA receptor activation, leading to proteasome-mediated degradation of DLG4 which is required for AMPA receptor endocytosis. Palmitoylated. Palmitoylation is required for targeting to postsynaptic density, plasma membrane and synapses.

The protein localises to the cell membrane. The protein resides in the postsynaptic density. Its subcellular location is the synapse. Functionally, postsynaptic scaffolding protein that plays a critical role in synaptogenesis and synaptic plasticity by providing a platform for the postsynaptic clustering of crucial synaptic proteins. The protein is Disks large homolog 4 (dlg4) of Danio rerio (Zebrafish).